Reading from the N-terminus, the 250-residue chain is Triosephosphate isomerase (250 aa).

9-11 (NWK) serves as a coordination point for substrate. The Electrophile role is filled by H94. E166 serves as the catalytic Proton acceptor. Substrate-binding positions include G172, S212, and 233–234 (GG).

Belongs to the triosephosphate isomerase family. As to quaternary structure, homodimer.

The protein resides in the cytoplasm. The catalysed reaction is D-glyceraldehyde 3-phosphate = dihydroxyacetone phosphate. It functions in the pathway carbohydrate biosynthesis; gluconeogenesis. The protein operates within carbohydrate degradation; glycolysis; D-glyceraldehyde 3-phosphate from glycerone phosphate: step 1/1. Functionally, involved in the gluconeogenesis. Catalyzes stereospecifically the conversion of dihydroxyacetone phosphate (DHAP) to D-glyceraldehyde-3-phosphate (G3P). This is Triosephosphate isomerase from Thermus thermophilus (strain ATCC 27634 / DSM 579 / HB8).